The sequence spans 363 residues: NAD(P)H-quinone oxidoreductase subunit 1, chloroplastic (363 aa).

The next 6 membrane-spanning stretches (helical) occupy residues 28 to 48 (WVFV…LAIV), 98 to 118 (FSFG…VIPF), 129 to 149 (IGVF…LMSG), 253 to 273 (FGLF…FVTV), 300 to 320 (VFVT…FIFV), and 336 to 356 (LLNL…LLTT).

Belongs to the complex I subunit 1 family. NDH is composed of at least 16 different subunits, 5 of which are encoded in the nucleus.

The protein localises to the plastid. It localises to the chloroplast thylakoid membrane. The catalysed reaction is a plastoquinone + NADH + (n+1) H(+)(in) = a plastoquinol + NAD(+) + n H(+)(out). It carries out the reaction a plastoquinone + NADPH + (n+1) H(+)(in) = a plastoquinol + NADP(+) + n H(+)(out). Its function is as follows. NDH shuttles electrons from NAD(P)H:plastoquinone, via FMN and iron-sulfur (Fe-S) centers, to quinones in the photosynthetic chain and possibly in a chloroplast respiratory chain. The immediate electron acceptor for the enzyme in this species is believed to be plastoquinone. Couples the redox reaction to proton translocation, and thus conserves the redox energy in a proton gradient. The protein is NAD(P)H-quinone oxidoreductase subunit 1, chloroplastic of Phaseolus vulgaris (Kidney bean).